A 450-amino-acid polypeptide reads, in one-letter code: Phosphoglucosamine mutase 2 (450 aa).

Catalysis depends on Ser-101, which acts as the Phosphoserine intermediate. The Mg(2+) site is built by Ser-101, Asp-245, Asp-247, and Asp-249. Residue Ser-101 is modified to Phosphoserine.

The protein belongs to the phosphohexose mutase family. Requires Mg(2+) as cofactor. Post-translationally, activated by phosphorylation.

It carries out the reaction alpha-D-glucosamine 1-phosphate = D-glucosamine 6-phosphate. Functionally, catalyzes the conversion of glucosamine-6-phosphate to glucosamine-1-phosphate. The protein is Phosphoglucosamine mutase 2 of Shewanella sp. (strain MR-7).